A 114-amino-acid polypeptide reads, in one-letter code: Nucleoid-associated protein MAE_23910 (114 aa).

The protein belongs to the YbaB/EbfC family. In terms of assembly, homodimer.

It is found in the cytoplasm. Its subcellular location is the nucleoid. In terms of biological role, binds to DNA and alters its conformation. May be involved in regulation of gene expression, nucleoid organization and DNA protection. The sequence is that of Nucleoid-associated protein MAE_23910 from Microcystis aeruginosa (strain NIES-843 / IAM M-2473).